We begin with the raw amino-acid sequence, 272 residues long: Protein MGF 110-11L (272 aa).

The helical transmembrane segment at 1-17 threads the bilayer; that stretch reads MKVLLGLLLGYSVLILA. An N-linked (GlcNAc...) asparagine; by host glycan is attached at Asn-68. A run of 2 helical transmembrane segments spans residues 129-149 and 156-176; these read QFCL…CALC and TTMK…PVLN. A glycan (N-linked (GlcNAc...) asparagine; by host) is linked at Asn-264.

This sequence belongs to the asfivirus MGF 110 family.

The protein localises to the host membrane. In terms of biological role, plays a role in virus cell tropism, and may be required for efficient virus replication in macrophages. This Ornithodoros (relapsing fever ticks) protein is Protein MGF 110-11L.